Here is a 176-residue protein sequence, read N- to C-terminus: 3-hydroxydecanoyl-[acyl-carrier-protein] dehydratase (176 aa).

Histidine 75 is a catalytic residue.

The protein belongs to the thioester dehydratase family. FabA subfamily. In terms of assembly, homodimer.

It localises to the cytoplasm. It carries out the reaction a (3R)-hydroxyacyl-[ACP] = a (2E)-enoyl-[ACP] + H2O. It catalyses the reaction (3R)-hydroxydecanoyl-[ACP] = (2E)-decenoyl-[ACP] + H2O. The catalysed reaction is (2E)-decenoyl-[ACP] = (3Z)-decenoyl-[ACP]. The protein operates within lipid metabolism; fatty acid biosynthesis. Necessary for the introduction of cis unsaturation into fatty acids. Catalyzes the dehydration of (3R)-3-hydroxydecanoyl-ACP to E-(2)-decenoyl-ACP and then its isomerization to Z-(3)-decenoyl-ACP. Can catalyze the dehydratase reaction for beta-hydroxyacyl-ACPs with saturated chain lengths up to 16:0, being most active on intermediate chain length. The chain is 3-hydroxydecanoyl-[acyl-carrier-protein] dehydratase from Actinobacillus pleuropneumoniae serotype 5b (strain L20).